Here is a 436-residue protein sequence, read N- to C-terminus: Glutamate-1-semialdehyde 2,1-aminomutase (436 aa).

K276 carries the N6-(pyridoxal phosphate)lysine modification.

The protein belongs to the class-III pyridoxal-phosphate-dependent aminotransferase family. HemL subfamily. As to quaternary structure, homodimer. Requires pyridoxal 5'-phosphate as cofactor.

It localises to the cytoplasm. The enzyme catalyses (S)-4-amino-5-oxopentanoate = 5-aminolevulinate. It functions in the pathway porphyrin-containing compound metabolism; protoporphyrin-IX biosynthesis; 5-aminolevulinate from L-glutamyl-tRNA(Glu): step 2/2. Its pathway is porphyrin-containing compound metabolism; chlorophyll biosynthesis. This chain is Glutamate-1-semialdehyde 2,1-aminomutase, found in Synechococcus sp. (strain JA-2-3B'a(2-13)) (Cyanobacteria bacterium Yellowstone B-Prime).